Here is a 326-residue protein sequence, read N- to C-terminus: Tetraacyldisaccharide 4'-kinase (326 aa).

53–60 (SVGGNGKT) lines the ATP pocket.

The protein belongs to the LpxK family.

The catalysed reaction is a lipid A disaccharide + ATP = a lipid IVA + ADP + H(+). The protein operates within glycolipid biosynthesis; lipid IV(A) biosynthesis; lipid IV(A) from (3R)-3-hydroxytetradecanoyl-[acyl-carrier-protein] and UDP-N-acetyl-alpha-D-glucosamine: step 6/6. In terms of biological role, transfers the gamma-phosphate of ATP to the 4'-position of a tetraacyldisaccharide 1-phosphate intermediate (termed DS-1-P) to form tetraacyldisaccharide 1,4'-bis-phosphate (lipid IVA). The polypeptide is Tetraacyldisaccharide 4'-kinase (Actinobacillus pleuropneumoniae serotype 5b (strain L20)).